The following is a 337-amino-acid chain: Protein FAM76B (337 aa).

Residues 143–241 (EQRKSLGSTH…INQSTDSGGT (99 aa)) are disordered. A compositionally biased stretch (low complexity) spans 147-159 (SLGSTHSNSSSSS). The span at 166–187 (HHSKHHHHHHHHHRHSSSHHKI) shows a compositional bias: basic residues. Residues 213 to 222 (TPKKKPKLEF) show a composition bias toward basic and acidic residues. Positions 226–241 (NGDSSSINQSTDSGGT) are enriched in polar residues. The stretch at 301–326 (KDFVEQLQGKNRELLKQVAALSKGKK) forms a coiled coil.

It belongs to the FAM76 family.

Its function is as follows. Plays a role in hematopoiesis and immune system development, and participates in the inflammatory response. The polypeptide is Protein FAM76B (fam76b) (Xenopus laevis (African clawed frog)).